The sequence spans 353 residues: Polyprenal reductase 2 (353 aa).

The next 6 helical transmembrane spans lie at 11-31, 78-98, 175-195, 234-254, 291-308, and 313-335; these read PLLC…ALPI, FMHF…AIWF, MHIV…LSLA, PLLK…WGSL, YLAE…SGAE, and WFLF…NWYL.

Belongs to the steroid 5-alpha reductase family. Polyprenal reductase subfamily.

It localises to the cell membrane. The catalysed reaction is a di-trans,poly-cis-dolichal + NADP(+) = a di-trans,poly-cis-polyprenal + NADPH + H(+). It functions in the pathway protein modification; protein glycosylation. Functionally, plays a key role in early steps of protein N-linked glycosylation by being involved in the conversion of polyprenol into dolichol. Acts as a polyprenal reductase that mediates the reduction of polyprenal into dolichal in a NADP-dependent mechanism. Dolichols are required for the synthesis of dolichol-linked monosaccharides and the oligosaccharide precursor used for N-glycosylation. The chain is Polyprenal reductase 2 from Oryza sativa subsp. indica (Rice).